The following is a 447-amino-acid chain: Trigger factor (447 aa).

One can recognise a PPIase FKBP-type domain in the interval 164–249 (GDLVVIDFIG…VKEVKQAVVP (86 aa)).

The protein belongs to the FKBP-type PPIase family. Tig subfamily.

The protein resides in the cytoplasm. The enzyme catalyses [protein]-peptidylproline (omega=180) = [protein]-peptidylproline (omega=0). Functionally, involved in protein export. Acts as a chaperone by maintaining the newly synthesized protein in an open conformation. Functions as a peptidyl-prolyl cis-trans isomerase. In Rhodospirillum rubrum (strain ATCC 11170 / ATH 1.1.1 / DSM 467 / LMG 4362 / NCIMB 8255 / S1), this protein is Trigger factor.